Reading from the N-terminus, the 265-residue chain is Small ribosomal subunit protein uS2 (265 aa).

It belongs to the universal ribosomal protein uS2 family.

This Aliarcobacter butzleri (strain RM4018) (Arcobacter butzleri) protein is Small ribosomal subunit protein uS2.